Reading from the N-terminus, the 55-residue chain is Large ribosomal subunit protein uL15 (55 aa).

It belongs to the universal ribosomal protein uL15 family. In terms of assembly, part of the 50S ribosomal subunit.

In terms of biological role, binds to the 23S rRNA. The sequence is that of Large ribosomal subunit protein uL15 (rplO) from Lactococcus lactis subsp. cremoris (Streptococcus cremoris).